The following is a 269-amino-acid chain: Formamidopyrimidine-DNA glycosylase (269 aa).

Proline 2 (schiff-base intermediate with DNA) is an active-site residue. The active-site Proton donor is glutamate 3. Lysine 58 (proton donor; for beta-elimination activity) is an active-site residue. Positions 91, 110, and 150 each coordinate DNA. An FPG-type zinc finger spans residues 235–269 (SVYGCENKTCHFCKSKIIKIVQNQRSTFYCRKCQT). The Proton donor; for delta-elimination activity role is filled by arginine 259.

The protein belongs to the FPG family. Monomer. Zn(2+) serves as cofactor.

It carries out the reaction Hydrolysis of DNA containing ring-opened 7-methylguanine residues, releasing 2,6-diamino-4-hydroxy-5-(N-methyl)formamidopyrimidine.. The catalysed reaction is 2'-deoxyribonucleotide-(2'-deoxyribose 5'-phosphate)-2'-deoxyribonucleotide-DNA = a 3'-end 2'-deoxyribonucleotide-(2,3-dehydro-2,3-deoxyribose 5'-phosphate)-DNA + a 5'-end 5'-phospho-2'-deoxyribonucleoside-DNA + H(+). Its function is as follows. Involved in base excision repair of DNA damaged by oxidation or by mutagenic agents. Acts as a DNA glycosylase that recognizes and removes damaged bases. Has a preference for oxidized purines, such as 7,8-dihydro-8-oxoguanine (8-oxoG). Has AP (apurinic/apyrimidinic) lyase activity and introduces nicks in the DNA strand. Cleaves the DNA backbone by beta-delta elimination to generate a single-strand break at the site of the removed base with both 3'- and 5'-phosphates. The sequence is that of Formamidopyrimidine-DNA glycosylase from Ruthia magnifica subsp. Calyptogena magnifica.